A 370-amino-acid polypeptide reads, in one-letter code: Keratin-associated protein 10-7 (370 aa).

The tract at residues 36-363 (DCPESCCEPP…CSRPACCGPT (328 aa)) is 30 X 5 AA repeats of C-C-X(3). 30 tandem repeats follow at residues 41–45 (CCEPP), 46–50 (CCAPA), 67–71 (CCRVT), 89–93 (CCQQS), 99–103 (CCASS), 109–113 (CCVPV), 114–118 (CCKTV), 119–123 (CCKPV), 135–139 (CCQQS), 145–149 (CCTSS), 155–159 (CCVPI), 160–164 (CCKPV), 172–176 (CCQQS), 186–190 (CCQAV), 208–212 (CCQQS), 218–222 (CCTSS), 228–232 (CCVPV), 233–237 (CCKPV), 238–242 (CCVPT), 250–254 (CCQPA), 255–259 (CCTSS), 265–269 (CCVPV), 270–274 (CCKPV), 275–279 (CCVPV), 287–291 (CCQQS), 297–301 (CCTTS), 302–306 (CCRPS), 321–325 (CCVPV), 339–343 (CCRPA), and 359–363 (CCGPT).

This sequence belongs to the KRTAP type 10 family. Interacts with hair keratins. Restricted to a narrow region of the hair fiber cuticle, lying approximately 20 cell layers above the apex of the dermal papilla of the hair root; not detected in any other tissues.

In terms of biological role, in the hair cortex, hair keratin intermediate filaments are embedded in an interfilamentous matrix, consisting of hair keratin-associated proteins (KRTAP), which are essential for the formation of a rigid and resistant hair shaft through their extensive disulfide bond cross-linking with abundant cysteine residues of hair keratins. The matrix proteins include the high-sulfur and high-glycine-tyrosine keratins. The protein is Keratin-associated protein 10-7 (KRTAP10-7) of Homo sapiens (Human).